The primary structure comprises 305 residues: Ribonuclease BN (305 aa).

His64, His66, Asp68, His69, His141, Asp212, and His270 together coordinate Zn(2+). Catalysis depends on Asp68, which acts as the Proton acceptor.

This sequence belongs to the RNase Z family. RNase BN subfamily. As to quaternary structure, homodimer. Zn(2+) serves as cofactor.

Functionally, zinc phosphodiesterase, which has both exoribonuclease and endoribonuclease activities. This Escherichia coli O157:H7 protein is Ribonuclease BN.